Here is a 2248-residue protein sequence, read N- to C-terminus: Zinc finger protein 407 (2248 aa).

Residues 1 to 32 are compositionally biased toward basic and acidic residues; the sequence is MMDSENKPENDEDEKINKEAQDLTKLSSHNED. Positions 1-84 are disordered; the sequence is MMDSENKPEN…RRKLDEAEPL (84 aa). 3 consecutive C2H2-type zinc fingers follow at residues 186-208, 215-238, and 244-268; these read LKCS…AESH, HTCC…KQAH, and FSCD…GKTH. Disordered stretches follow at residues 291–322 and 494–515; these read KKSR…GLRN and SETQ…GLHS. The span at 494–504 shows a compositional bias: polar residues; that stretch reads SETQEAEQGQG. 3 C2H2-type zinc fingers span residues 528-551, 557-581, and 615-639; these read CACT…KRCH, FYCR…SNQH, and FLCT…TEKH. Residues 667–700 form a disordered region; that stretch reads ESENAKESMDDSGKASQEEPLKSRVSHGNEVRHS. A compositionally biased stretch (basic and acidic residues) spans 669–699; sequence ENAKESMDDSGKASQEEPLKSRVSHGNEVRH. Residues 705-728 form a C2H2-type 7 zinc finger; that stretch reads FQCKKCFYKTRSSTVLTRHIKLRH. A disordered region spans residues 821–847; that stretch reads LSQSGGSTKDDELASTTTPKRGRPKGN. 2 C2H2-type zinc fingers span residues 850-873 and 879-903; these read RTCS…RRKH and YLCK…TKKH. Residues 910–962 form a disordered region; sequence EASGKHSSDIIVGPEGGSLEAGKKNAGSAVTMSDEHANKPAESPTSVLEKPDR. 2 consecutive C2H2-type zinc fingers follow at residues 1017–1040 and 1046–1070; these read NKCL…KRKH and FYCM…TEKH. At Ser1262 the chain carries Phosphoserine. 2 consecutive C2H2-type zinc fingers follow at residues 1444 to 1468 and 1486 to 1509; these read FHCL…SAGH and FKCV…KGQH. The C2H2-type 14; degenerate zinc-finger motif lies at 1537–1561; the sequence is NVCKYCGKMCRSSNSMAFLAHIRTH. 8 C2H2-type zinc fingers span residues 1567–1589, 1595–1618, 1628–1650, 1656–1680, 1686–1708, 1714–1736, 1742–1767, and 1773–1796; these read FKCK…VKRH, YKCH…LGKH, FTCH…MKLH, FKCT…YRTH, FLCD…RRQH, FKCD…KRVH, YRCP…TGKH, and YNCP…KEQH.

It is found in the nucleus. In terms of biological role, may be involved in transcriptional regulation. This Homo sapiens (Human) protein is Zinc finger protein 407 (ZNF407).